The following is a 61-amino-acid chain: Small ribosomal subunit protein uS14 (61 aa).

Residues Cys-24, Cys-27, Cys-40, and Cys-43 each contribute to the Zn(2+) site.

This sequence belongs to the universal ribosomal protein uS14 family. Zinc-binding uS14 subfamily. As to quaternary structure, part of the 30S ribosomal subunit. Contacts proteins S3 and S10. The cofactor is Zn(2+).

Its function is as follows. Binds 16S rRNA, required for the assembly of 30S particles and may also be responsible for determining the conformation of the 16S rRNA at the A site. The sequence is that of Small ribosomal subunit protein uS14 from Aliarcobacter butzleri (strain RM4018) (Arcobacter butzleri).